A 139-amino-acid polypeptide reads, in one-letter code: Protein archease (139 aa).

Residues Asp12, Asp138, and Ile139 each coordinate Ca(2+).

It belongs to the archease family.

Functionally, activates the tRNA-splicing ligase complex by facilitating the enzymatic turnover of catalytic subunit RtcB. Acts by promoting the guanylylation of RtcB, a key intermediate step in tRNA ligation. Can also alter the NTP specificity of RtcB such that ATP, dGTP or ITP is used efficiently. This is Protein archease from Saccharolobus islandicus (strain L.S.2.15 / Lassen #1) (Sulfolobus islandicus).